A 35-amino-acid chain; its full sequence is Dolichyl-diphosphooligosaccharide--protein glycosyltransferase subunit 4B (35 aa).

The Lumenal portion of the chain corresponds to 1 to 8 (MFDDQDLG). Residues 9–29 (FFANFLGIFIFIMVIAYHFVV) form a helical membrane-spanning segment. The Cytoplasmic portion of the chain corresponds to 30–35 (AEPKFE).

This sequence belongs to the OST4 family. As to quaternary structure, component of the oligosaccharyltransferase (OST) complex.

Its subcellular location is the endoplasmic reticulum membrane. Functionally, subunit of the oligosaccharyl transferase (OST) complex that catalyzes the initial transfer of a defined glycan (Glc(3)Man(9)GlcNAc(2) in eukaryotes) from the lipid carrier dolichol-pyrophosphate to an asparagine residue within an Asn-X-Ser/Thr consensus motif in nascent polypeptide chains, the first step in protein N-glycosylation. N-glycosylation occurs cotranslationally and the complex associates with the Sec61 complex at the channel-forming translocon complex that mediates protein translocation across the endoplasmic reticulum (ER). All subunits are required for a maximal enzyme activity. This chain is Dolichyl-diphosphooligosaccharide--protein glycosyltransferase subunit 4B (OST4B), found in Arabidopsis thaliana (Mouse-ear cress).